The following is a 637-amino-acid chain: Zinc-transporting ATPase (637 aa).

4 helical membrane-spanning segments follow: residues 43-63 (GWLL…AFVI), 89-109 (IFAA…ILIF), 258-278 (GVLI…GWSW), and 286-306 (MVFM…PAAL). Residue aspartate 337 is the 4-aspartylphosphate intermediate of the active site. The Mg(2+) site is built by aspartate 535 and aspartate 539. A helical transmembrane segment spans residues 599–619 (VICLLICANFLQAMELPFGVI).

It belongs to the cation transport ATPase (P-type) (TC 3.A.3) family. Type IB subfamily.

The protein localises to the cell membrane. The catalysed reaction is Zn(2+)(out) + ATP(in) + H2O(in) = Zn(2+)(in) + ADP(in) + phosphate(in) + H(+)(in). Couples the hydrolysis of ATP with the transport of zinc into the cell. Plays an important role in protecting cells against oxidative stress. ZosA-mediated zinc transport is required for post-transcriptional control of comK and competence development. The protein is Zinc-transporting ATPase (zosA) of Bacillus subtilis (strain 168).